The chain runs to 86 residues: Muscarinic toxin 2 (86 aa).

The N-terminal stretch at 1 to 21 (MKTLLLTLVVVTIVCLDLGYT) is a signal peptide. Disulfide bonds link C24–C45, C38–C63, C67–C78, and C79–C84.

The protein belongs to the three-finger toxin family. Short-chain subfamily. Aminergic toxin sub-subfamily. As to quaternary structure, monomer. Expressed by the venom gland.

It localises to the secreted. In terms of biological role, binds irreversibly to M1 (CHRM1) muscarinic acetylcholine receptors, and reveals a slightly weaker effect on M3 (CHRM3) receptors. The mechanism of toxin-receptor interaction comprises at least two steps. The first step is fast with no competition between the toxin and the antagonist. The second step is slow with formation of a more stable toxin-receptor complex and inhibition of the antagonist binding. The polypeptide is Muscarinic toxin 2 (Dendroaspis angusticeps (Eastern green mamba)).